The following is a 375-amino-acid chain: Outer membrane porin OmpD (375 aa).

Positions 1-34 are cleaved as a signal peptide; it reads MRKHAKKIIRIIKMKLKLVAVAVTSLLAAGVVNA.

It belongs to the Gram-negative porin family. In terms of assembly, homotrimer. Mixed heterotrimers with other porins are also probable.

The protein resides in the cell outer membrane. Its function is as follows. Forms pores that allow passive diffusion of small molecules across the outer membrane. This chain is Outer membrane porin OmpD, found in Salmonella typhimurium (strain SL1344).